We begin with the raw amino-acid sequence, 348 residues long: Putative agmatine deiminase (348 aa).

The active-site Amidino-cysteine intermediate is Cys335.

This sequence belongs to the agmatine deiminase family.

It catalyses the reaction agmatine + H2O = N-carbamoylputrescine + NH4(+). The polypeptide is Putative agmatine deiminase (Legionella pneumophila subsp. pneumophila (strain Philadelphia 1 / ATCC 33152 / DSM 7513)).